Here is a 401-residue protein sequence, read N- to C-terminus: S-adenosylmethionine synthase (401 aa).

An ATP-binding site is contributed by 137-142 (GQGSGD).

The protein belongs to the AdoMet synthase 2 family. It depends on Mg(2+) as a cofactor.

The enzyme catalyses L-methionine + ATP + H2O = S-adenosyl-L-methionine + phosphate + diphosphate. It participates in amino-acid biosynthesis; S-adenosyl-L-methionine biosynthesis; S-adenosyl-L-methionine from L-methionine: step 1/1. In terms of biological role, catalyzes the formation of S-adenosylmethionine from methionine and ATP. The polypeptide is S-adenosylmethionine synthase (Haloquadratum walsbyi (strain DSM 16790 / HBSQ001)).